Reading from the N-terminus, the 145-residue chain is uncharacterized protein (145 aa).

A helical transmembrane segment spans residues 16 to 36 (VLAYLLQLSASLVLPVAIWLI).

It localises to the mitochondrion membrane. This is an uncharacterized protein from Arabidopsis thaliana (Mouse-ear cress).